The following is a 957-amino-acid chain: Collagen alpha-1(XXI) chain (957 aa).

Positions Met1–Ala22 are cleaved as a signal peptide. One can recognise a VWFA domain in the interval Asp37–Leu211. The N-linked (GlcNAc...) asparagine glycan is linked to Asn62. The 183-residue stretch at Gly230–Pro412 folds into the Laminin G-like domain. Collagen-like domains lie at Pro448–Gly500, Leu501–Gly542, and Ser543–Ala594. Disordered regions lie at residues Pro448–Arg786 and Gly825–Pro938. Low complexity-rich tracts occupy residues Pro451–Leu462 and Gln471–Gln481. The segment covering Glu507 to Arg517 has biased composition (basic and acidic residues). Low complexity-rich tracts occupy residues Gln618–Pro637 and Glu705–His729. 4 consecutive Collagen-like domains span residues Ser681–Lys733, Gly734–Glu787, Gly825–Gly882, and Gly884–Gly934. Residues Ala732–Pro742 show a composition bias toward basic and acidic residues. Residues Ile829–Pro838 show a composition bias toward pro residues. Over residues Glu839–Arg874 the composition is skewed to low complexity. The segment covering Gln889–Pro900 has biased composition (pro residues).

This sequence belongs to the fibril-associated collagens with interrupted helices (FACIT) family. In terms of tissue distribution, highly expressed in lymph node, jejunum, pancreas, stomach, trachea, testis, uterus and placenta; moderately expressed in brain, colon, lung, prostate, spinal cord, salivary gland and vascular smooth-muscle cells and very weakly expressed in heart, liver, kidney, bone marrow, spleen, thymus, skeletal muscle, adrenal gland and peripheral leukocytes. Expression in heart was higher in the right ventricle and atrium than in the left ventricle and atrium.

The protein resides in the secreted. Its subcellular location is the extracellular space. The protein localises to the extracellular matrix. It localises to the cytoplasm. This is Collagen alpha-1(XXI) chain (COL21A1) from Homo sapiens (Human).